The sequence spans 103 residues: Small ribosomal subunit protein uS10 (103 aa).

The protein belongs to the universal ribosomal protein uS10 family. As to quaternary structure, part of the 30S ribosomal subunit.

Involved in the binding of tRNA to the ribosomes. In Methylibium petroleiphilum (strain ATCC BAA-1232 / LMG 22953 / PM1), this protein is Small ribosomal subunit protein uS10.